The chain runs to 155 residues: Transcription antitermination protein NusB (155 aa).

The protein belongs to the NusB family.

Functionally, involved in transcription antitermination. Required for transcription of ribosomal RNA (rRNA) genes. Binds specifically to the boxA antiterminator sequence of the ribosomal RNA (rrn) operons. This chain is Transcription antitermination protein NusB, found in Vibrio parahaemolyticus serotype O3:K6 (strain RIMD 2210633).